The following is a 149-amino-acid chain: Mediator of RNA polymerase II transcription subunit 9 (149 aa).

The interval 18–64 (TNPTLDKPNAEATKEEFSSAENRDEKDYLTNQQPKNLSTPSTSSNGE) is disordered. Over residues 25–45 (PNAEATKEEFSSAENRDEKDY) the composition is skewed to basic and acidic residues. Positions 46–63 (LTNQQPKNLSTPSTSSNG) are enriched in polar residues. Short sequence motifs (nuclear localization signal) lie at residues 77-99 (RKDP…HRLK) and 136-149 (KRDV…KLQR).

This sequence belongs to the Mediator complex subunit 9 family. Component of the Mediator complex, which is composed of at least 21 subunits that form three structurally distinct submodules. The Mediator head module contains MED6, MED8, MED11, SRB4/MED17, SRB5/MED18, ROX3/MED19, SRB2/MED20 and SRB6/MED22, the middle module contains MED1, MED4, NUT1/MED5, MED7, CSE2/MED9, NUT2/MED10, SRB7/MED21 and SOH1/MED31, and the tail module contains MED2, PGD1/MED3, RGR1/MED14, GAL11/MED15 and SIN4/MED16. The head and the middle modules interact directly with RNA polymerase II, whereas the elongated tail module interacts with gene-specific regulatory proteins. CSE2/MED9 interacts directly with MED4.

Its subcellular location is the nucleus. In terms of biological role, component of the Mediator complex, a coactivator involved in the regulated transcription of nearly all RNA polymerase II-dependent genes. Mediator functions as a bridge to convey information from gene-specific regulatory proteins to the basal RNA polymerase II transcription machinery. The Mediator complex, having a compact conformation in its free form, is recruited to promoters by direct interactions with regulatory proteins and serves for the assembly of a functional preinitiation complex with RNA polymerase II and the general transcription factors. The Mediator complex unfolds to an extended conformation and partially surrounds RNA polymerase II, specifically interacting with the unphosphorylated form of the C-terminal domain (CTD) of RNA polymerase II. The Mediator complex dissociates from the RNA polymerase II holoenzyme and stays at the promoter when transcriptional elongation begins. The chain is Mediator of RNA polymerase II transcription subunit 9 (CSE2) from Saccharomyces cerevisiae (strain ATCC 204508 / S288c) (Baker's yeast).